Here is a 336-residue protein sequence, read N- to C-terminus: Holliday junction branch migration complex subunit RuvB (336 aa).

Residues 4-184 are large ATPase domain (RuvB-L); it reads ADRLISASGG…FGIVQRLEFY (181 aa). Residues Ile-23, Arg-24, Gly-65, Lys-68, Thr-69, Thr-70, 131 to 133, Arg-174, Tyr-184, and Arg-221 contribute to the ATP site; that span reads EDY. Mg(2+) is bound at residue Thr-69. Positions 185-255 are small ATPAse domain (RuvB-S); it reads NVKDLTDIVA…IAARAMDMLD (71 aa). Residues 258 to 336 form a head domain (RuvB-H) region; sequence NEGFDFMDRK…HFGLQRPDEG (79 aa). Residues Arg-313 and Arg-318 each contribute to the DNA site.

It belongs to the RuvB family. As to quaternary structure, homohexamer. Forms an RuvA(8)-RuvB(12)-Holliday junction (HJ) complex. HJ DNA is sandwiched between 2 RuvA tetramers; dsDNA enters through RuvA and exits via RuvB. An RuvB hexamer assembles on each DNA strand where it exits the tetramer. Each RuvB hexamer is contacted by two RuvA subunits (via domain III) on 2 adjacent RuvB subunits; this complex drives branch migration. In the full resolvosome a probable DNA-RuvA(4)-RuvB(12)-RuvC(2) complex forms which resolves the HJ.

The protein localises to the cytoplasm. The catalysed reaction is ATP + H2O = ADP + phosphate + H(+). Its function is as follows. The RuvA-RuvB-RuvC complex processes Holliday junction (HJ) DNA during genetic recombination and DNA repair, while the RuvA-RuvB complex plays an important role in the rescue of blocked DNA replication forks via replication fork reversal (RFR). RuvA specifically binds to HJ cruciform DNA, conferring on it an open structure. The RuvB hexamer acts as an ATP-dependent pump, pulling dsDNA into and through the RuvAB complex. RuvB forms 2 homohexamers on either side of HJ DNA bound by 1 or 2 RuvA tetramers; 4 subunits per hexamer contact DNA at a time. Coordinated motions by a converter formed by DNA-disengaged RuvB subunits stimulates ATP hydrolysis and nucleotide exchange. Immobilization of the converter enables RuvB to convert the ATP-contained energy into a lever motion, pulling 2 nucleotides of DNA out of the RuvA tetramer per ATP hydrolyzed, thus driving DNA branch migration. The RuvB motors rotate together with the DNA substrate, which together with the progressing nucleotide cycle form the mechanistic basis for DNA recombination by continuous HJ branch migration. Branch migration allows RuvC to scan DNA until it finds its consensus sequence, where it cleaves and resolves cruciform DNA. This Aeromonas hydrophila subsp. hydrophila (strain ATCC 7966 / DSM 30187 / BCRC 13018 / CCUG 14551 / JCM 1027 / KCTC 2358 / NCIMB 9240 / NCTC 8049) protein is Holliday junction branch migration complex subunit RuvB.